The sequence spans 149 residues: Nucleoside diphosphate kinase (149 aa).

ATP contacts are provided by Lys-9, Phe-57, Arg-85, Thr-91, Arg-102, and Asn-112. His-115 serves as the catalytic Pros-phosphohistidine intermediate.

The protein belongs to the NDK family. Homotetramer. Requires Mg(2+) as cofactor.

It is found in the cytoplasm. It catalyses the reaction a 2'-deoxyribonucleoside 5'-diphosphate + ATP = a 2'-deoxyribonucleoside 5'-triphosphate + ADP. It carries out the reaction a ribonucleoside 5'-diphosphate + ATP = a ribonucleoside 5'-triphosphate + ADP. Major role in the synthesis of nucleoside triphosphates other than ATP. The ATP gamma phosphate is transferred to the NDP beta phosphate via a ping-pong mechanism, using a phosphorylated active-site intermediate. The sequence is that of Nucleoside diphosphate kinase from Thermomicrobium roseum (strain ATCC 27502 / DSM 5159 / P-2).